The chain runs to 286 residues: uncharacterized protein (286 aa).

Histidine 183 serves as the catalytic Proton donor. The active-site Nucleophile is the cysteine 277.

Belongs to the DDAH family.

This is an uncharacterized protein from Bacillus subtilis (strain 168).